A 529-amino-acid chain; its full sequence is Tyrosinase (529 aa).

Positions 1–18 are cleaved as a signal peptide; the sequence is MLLAVLYCLLWSFQTSAG. Residues 19-476 are Lumenal, melanosome-facing; that stretch reads HFPRACVSSK…YLEQASRIWS (458 aa). 3 N-linked (GlcNAc...) asparagine glycosylation sites follow: asparagine 86, asparagine 111, and asparagine 161. Positions 180, 202, and 211 each coordinate Cu cation. Asparagine 230 carries an N-linked (GlcNAc...) asparagine glycan. Residues 287–313 form a disordered region; the sequence is SLCNGTPEGPLRRNPGNHDKSRTPRLP. Asparagine 337 is a glycosylation site (N-linked (GlcNAc...) asparagine). Cu cation contacts are provided by histidine 363 and histidine 367. N-linked (GlcNAc...) asparagine glycosylation occurs at asparagine 371. Histidine 390 lines the Cu cation pocket. Residues 477 to 497 traverse the membrane as a helical segment; it reads WLLGAAMVGAVLTALLAGLVS. Over 498–529 the chain is Cytoplasmic; the sequence is LLCRHKRKQLPEEKQPLLMEKEDYHSLYQSHL.

This sequence belongs to the tyrosinase family. Forms an OPN3-dependent complex with DCT in response to blue light in melanocytes. It depends on Cu(2+) as a cofactor. Glycosylated.

Its subcellular location is the melanosome membrane. It is found in the melanosome. The catalysed reaction is 2 L-dopa + O2 = 2 L-dopaquinone + 2 H2O. It carries out the reaction L-tyrosine + O2 = L-dopaquinone + H2O. The enzyme catalyses 2 5,6-dihydroxyindole-2-carboxylate + O2 = 2 indole-5,6-quinone-2-carboxylate + 2 H2O. In terms of biological role, this is a copper-containing oxidase that functions in the formation of pigments such as melanins and other polyphenolic compounds. Catalyzes the initial and rate limiting step in the cascade of reactions leading to melanin production from tyrosine. In addition to hydroxylating tyrosine to DOPA (3,4-dihydroxyphenylalanine), also catalyzes the oxidation of DOPA to DOPA-quinone, and possibly the oxidation of DHI (5,6-dihydroxyindole) to indole-5,6 quinone. This is Tyrosinase from Homo sapiens (Human).